The chain runs to 90 residues: MARMVQCIKLNKEAEGMDFAPLPGELGKKIWNQVSKEAWAAWLKQQTMLINENRLNMADPRARQYLLKQVEKYFFEGGADMAQGYVPEAE.

It belongs to the Fe(2+)-trafficking protein family.

In terms of biological role, could be a mediator in iron transactions between iron acquisition and iron-requiring processes, such as synthesis and/or repair of Fe-S clusters in biosynthetic enzymes. The chain is Probable Fe(2+)-trafficking protein from Polynucleobacter asymbioticus (strain DSM 18221 / CIP 109841 / QLW-P1DMWA-1) (Polynucleobacter necessarius subsp. asymbioticus).